The following is a 617-amino-acid chain: Dihydroxy-acid dehydratase (617 aa).

Mg(2+) is bound at residue aspartate 81. Cysteine 122 lines the [2Fe-2S] cluster pocket. Positions 123 and 124 each coordinate Mg(2+). The residue at position 124 (lysine 124) is an N6-carboxylysine. Cysteine 195 lines the [2Fe-2S] cluster pocket. Position 491 (glutamate 491) interacts with Mg(2+). Residue serine 517 is the Proton acceptor of the active site.

This sequence belongs to the IlvD/Edd family. As to quaternary structure, homodimer. [2Fe-2S] cluster serves as cofactor. Requires Mg(2+) as cofactor.

It carries out the reaction (2R)-2,3-dihydroxy-3-methylbutanoate = 3-methyl-2-oxobutanoate + H2O. The catalysed reaction is (2R,3R)-2,3-dihydroxy-3-methylpentanoate = (S)-3-methyl-2-oxopentanoate + H2O. Its pathway is amino-acid biosynthesis; L-isoleucine biosynthesis; L-isoleucine from 2-oxobutanoate: step 3/4. The protein operates within amino-acid biosynthesis; L-valine biosynthesis; L-valine from pyruvate: step 3/4. Functions in the biosynthesis of branched-chain amino acids. Catalyzes the dehydration of (2R,3R)-2,3-dihydroxy-3-methylpentanoate (2,3-dihydroxy-3-methylvalerate) into 2-oxo-3-methylpentanoate (2-oxo-3-methylvalerate) and of (2R)-2,3-dihydroxy-3-methylbutanoate (2,3-dihydroxyisovalerate) into 2-oxo-3-methylbutanoate (2-oxoisovalerate), the penultimate precursor to L-isoleucine and L-valine, respectively. The sequence is that of Dihydroxy-acid dehydratase from Buchnera aphidicola subsp. Diuraphis noxia.